Consider the following 245-residue polypeptide: Adenosylcobinamide-GDP ribazoletransferase (245 aa).

Transmembrane regions (helical) follow at residues 31-51, 57-77, 109-129, 134-154, and 176-196; these read LLHYPAVGLFLGALLWLAALL, PLLQAALLLALWVALTGALHL, VAVVVLVIMLLLKFSALLVVL, PAALVLAPLLGRAALLALFLC, and ALMVLALVVIGCLLLGATGLL.

The protein belongs to the CobS family. Mg(2+) serves as cofactor.

It localises to the cell inner membrane. The enzyme catalyses alpha-ribazole + adenosylcob(III)inamide-GDP = adenosylcob(III)alamin + GMP + H(+). It carries out the reaction alpha-ribazole 5'-phosphate + adenosylcob(III)inamide-GDP = adenosylcob(III)alamin 5'-phosphate + GMP + H(+). It functions in the pathway cofactor biosynthesis; adenosylcobalamin biosynthesis; adenosylcobalamin from cob(II)yrinate a,c-diamide: step 7/7. Functionally, joins adenosylcobinamide-GDP and alpha-ribazole to generate adenosylcobalamin (Ado-cobalamin). Also synthesizes adenosylcobalamin 5'-phosphate from adenosylcobinamide-GDP and alpha-ribazole 5'-phosphate. This chain is Adenosylcobinamide-GDP ribazoletransferase, found in Stutzerimonas stutzeri (strain A1501) (Pseudomonas stutzeri).